We begin with the raw amino-acid sequence, 128 residues long: CD59 glycoprotein (128 aa).

The first 25 residues, 1–25 (MGIQGGSVLFGLLLVLAVFCHSGHS), serve as a signal peptide directing secretion. The UPAR/Ly6 domain occupies 26 to 108 (LQCYNCPNPT…QLENGGTSLS (83 aa)). Cystine bridges form between Cys-28/Cys-51, Cys-31/Cys-38, Cys-44/Cys-64, Cys-70/Cys-88, and Cys-89/Cys-94. The N-linked (GlcNAc...) asparagine glycan is linked to Asn-43. Asn-102 carries the GPI-anchor amidated asparagine lipid modification. A propeptide spans 103–128 (GGTSLSEKTVVLLVTLLLAAAWCLHP) (removed in mature form).

Interacts with T-cell surface antigen CD2. N- and O-glycosylated.

Its subcellular location is the cell membrane. The protein resides in the secreted. Potent inhibitor of the complement membrane attack complex (MAC) action, which protects self-cells from damage during complement activation. Acts by binding to the beta-haipins of C8 (C8A and C8B) components of the assembling MAC, forming an intermolecular beta-sheet that prevents incorporation of the multiple copies of C9 required for complete formation of the osmolytic pore. This chain is CD59 glycoprotein, found in Chlorocebus aethiops (Green monkey).